The chain runs to 439 residues: Mitochondrial distribution and morphology protein 10 (439 aa).

Residues 275 to 305 (LPDATPPSFQVPSSSSSSSNPVSPSTSQPPT) are disordered. Low complexity predominate over residues 280-305 (PPSFQVPSSSSSSSNPVSPSTSQPPT).

The protein belongs to the MDM10 family. Component of the ER-mitochondria encounter structure (ERMES) or MDM complex, composed of MMM1, MDM10, MDM12 and MDM34. Associates with the mitochondrial outer membrane sorting assembly machinery SAM(core) complex.

It localises to the mitochondrion outer membrane. Its function is as follows. Component of the ERMES/MDM complex, which serves as a molecular tether to connect the endoplasmic reticulum and mitochondria. Components of this complex are involved in the control of mitochondrial shape and protein biogenesis and may function in phospholipid exchange. MDM10 is involved in the late assembly steps of the general translocase of the mitochondrial outer membrane (TOM complex). Functions in the TOM40-specific route of the assembly of outer membrane beta-barrel proteins, including the association of TOM40 with the receptor TOM22 and small TOM proteins. Can associate with the SAM(core) complex as well as the MDM12-MMM1 complex, both involved in late steps of the major beta-barrel assembly pathway, that is responsible for biogenesis of all outer membrane beta-barrel proteins. May act as a switch that shuttles between both complexes and channels precursor proteins into the TOM40-specific pathway. Plays a role in mitochondrial morphology and in the inheritance of mitochondria. This chain is Mitochondrial distribution and morphology protein 10, found in Laccaria bicolor (strain S238N-H82 / ATCC MYA-4686) (Bicoloured deceiver).